Reading from the N-terminus, the 144-residue chain is MAVLALLFCLATFPSCILSQVQLKESGPGLVAPSQSLSITCTVSGFSLTGYGVNWVRQPPGKGLEWLGTIWGNGSTDYNSTLKSRLTITKDNSKSQVFLKMNSLQTDDTARYYCASVSIYYYGRSDKYFTLDYWGQGTSVTVSS.

Residues 1–19 (MAVLALLFCLATFPSCILS) form the signal peptide. The Ig-like domain occupies 20–130 (QVQLKESGPG…YYGRSDKYFT (111 aa)).

This chain is Ig heavy chain V region MOPC 141, found in Mus musculus (Mouse).